A 645-amino-acid polypeptide reads, in one-letter code: Cysteine-rich receptor-like protein kinase 19 (645 aa).

A signal peptide spans 1–20 (MSSLISFIFLFLFSSITASA). The Extracellular segment spans residues 21–262 (QNTFYLYHNC…PRPGKGGNSS (242 aa)). Gnk2-homologous domains are found at residues 24-129 (FYLY…NRNI) and 135-239 (TDGG…NYAF). 7 N-linked (GlcNAc...) asparagine glycosylation sites follow: asparagine 29, asparagine 39, asparagine 57, asparagine 101, asparagine 185, asparagine 241, and asparagine 260. Residues 263–283 (VIIIAVVVPITVLFLLLVAVF) form a helical membrane-spanning segment. The Cytoplasmic portion of the chain corresponds to 284 to 645 (SVRAKNKRTL…EASITRVTPR (362 aa)). The region spanning 326 to 603 (FLPINKLGQG…IVQMLTTSLI (278 aa)) is the Protein kinase domain. ATP contacts are provided by residues 332-340 (LGQGGFGEV) and lysine 354. At tyrosine 399 the chain carries Phosphotyrosine. Catalysis depends on aspartate 451, which acts as the Proton acceptor. Threonine 491 is modified (phosphothreonine). Tyrosine 499 is modified (phosphotyrosine). The tract at residues 616–645 (RSKQEQAGPSIDSSTHCSVDEASITRVTPR) is disordered. Residues 620 to 632 (EQAGPSIDSSTHC) show a composition bias toward polar residues.

This sequence belongs to the protein kinase superfamily. Ser/Thr protein kinase family. CRK subfamily. As to quaternary structure, interacts with MWL1.

It is found in the membrane. The catalysed reaction is L-seryl-[protein] + ATP = O-phospho-L-seryl-[protein] + ADP + H(+). The enzyme catalyses L-threonyl-[protein] + ATP = O-phospho-L-threonyl-[protein] + ADP + H(+). The protein is Cysteine-rich receptor-like protein kinase 19 (CRK19) of Arabidopsis thaliana (Mouse-ear cress).